Here is a 318-residue protein sequence, read N- to C-terminus: Glutathione synthetase (318 aa).

Residues 133 to 317 enclose the ATP-grasp domain; the sequence is KMYALQFTSV…LGQQVMAWLF (185 aa). 159 to 215 is a binding site for ATP; sequence VQQQGMAVLKPLGGKGGEGILFLQAGDRNLNSMIEISTQRGQLPVMLQEYLPAAKEG. Residues Glu288 and Asn290 each coordinate Mg(2+).

Belongs to the prokaryotic GSH synthase family. Mg(2+) serves as cofactor. It depends on Mn(2+) as a cofactor.

The catalysed reaction is gamma-L-glutamyl-L-cysteine + glycine + ATP = glutathione + ADP + phosphate + H(+). It functions in the pathway sulfur metabolism; glutathione biosynthesis; glutathione from L-cysteine and L-glutamate: step 2/2. The polypeptide is Glutathione synthetase (Thermosynechococcus vestitus (strain NIES-2133 / IAM M-273 / BP-1)).